The primary structure comprises 469 residues: Asparagine--tRNA ligase (469 aa).

It belongs to the class-II aminoacyl-tRNA synthetase family. As to quaternary structure, homodimer.

The protein resides in the cytoplasm. The catalysed reaction is tRNA(Asn) + L-asparagine + ATP = L-asparaginyl-tRNA(Asn) + AMP + diphosphate + H(+). The chain is Asparagine--tRNA ligase from Porphyromonas gingivalis (strain ATCC BAA-308 / W83).